A 378-amino-acid polypeptide reads, in one-letter code: Erythronate-4-phosphate dehydrogenase (378 aa).

Substrate contacts are provided by serine 45 and threonine 66. Residues aspartate 146 and threonine 175 each contribute to the NAD(+) site. Residue arginine 208 is part of the active site. Residue aspartate 232 coordinates NAD(+). Residue glutamate 237 is part of the active site. Residue histidine 254 is the Proton donor of the active site. Glycine 257 contacts NAD(+). Residue tyrosine 258 coordinates substrate.

The protein belongs to the D-isomer specific 2-hydroxyacid dehydrogenase family. PdxB subfamily. As to quaternary structure, homodimer.

It localises to the cytoplasm. It carries out the reaction 4-phospho-D-erythronate + NAD(+) = (R)-3-hydroxy-2-oxo-4-phosphooxybutanoate + NADH + H(+). It participates in cofactor biosynthesis; pyridoxine 5'-phosphate biosynthesis; pyridoxine 5'-phosphate from D-erythrose 4-phosphate: step 2/5. Functionally, catalyzes the oxidation of erythronate-4-phosphate to 3-hydroxy-2-oxo-4-phosphonooxybutanoate. The protein is Erythronate-4-phosphate dehydrogenase of Citrobacter koseri (strain ATCC BAA-895 / CDC 4225-83 / SGSC4696).